A 258-amino-acid chain; its full sequence is Snake venom serine protease PA (258 aa).

An N-terminal signal peptide occupies residues 1–18; the sequence is MVLIRVLANLLILQLSYA. Positions 19–24 are excised as a propeptide; that stretch reads QKSPEL. The Peptidase S1 domain occupies 25 to 249; that stretch reads VVGGDECNIN…YNDWIKSIIA (225 aa). 6 cysteine pairs are disulfide-bonded: C31-C163, C50-C66, C98-C256, C142-C210, C174-C189, and C200-C225. N-linked (GlcNAc...) asparagine glycosylation occurs at N44. Active-site charge relay system residues include H65 and D110. S204 acts as the Charge relay system in catalysis.

It belongs to the peptidase S1 family. Snake venom subfamily. Monomer. As to expression, expressed by the venom gland.

It localises to the secreted. Functionally, snake venom serine protease that may act in the hemostasis system of the prey. The protein is Snake venom serine protease PA of Trimeresurus stejnegeri (Chinese green tree viper).